Reading from the N-terminus, the 1167-residue chain is DNA-directed RNA polymerase subunit beta (1167 aa).

This sequence belongs to the RNA polymerase beta chain family. In terms of assembly, the RNAP catalytic core consists of 2 alpha, 1 beta, 1 beta' and 1 omega subunit. When a sigma factor is associated with the core the holoenzyme is formed, which can initiate transcription.

The catalysed reaction is RNA(n) + a ribonucleoside 5'-triphosphate = RNA(n+1) + diphosphate. Functionally, DNA-dependent RNA polymerase catalyzes the transcription of DNA into RNA using the four ribonucleoside triphosphates as substrates. In Mycolicibacterium vanbaalenii (strain DSM 7251 / JCM 13017 / BCRC 16820 / KCTC 9966 / NRRL B-24157 / PYR-1) (Mycobacterium vanbaalenii), this protein is DNA-directed RNA polymerase subunit beta.